Consider the following 185-residue polypeptide: Elongation factor P (185 aa).

The protein belongs to the elongation factor P family.

It is found in the cytoplasm. It participates in protein biosynthesis; polypeptide chain elongation. Its function is as follows. Involved in peptide bond synthesis. Stimulates efficient translation and peptide-bond synthesis on native or reconstituted 70S ribosomes in vitro. Probably functions indirectly by altering the affinity of the ribosome for aminoacyl-tRNA, thus increasing their reactivity as acceptors for peptidyl transferase. The polypeptide is Elongation factor P (Paraburkholderia phymatum (strain DSM 17167 / CIP 108236 / LMG 21445 / STM815) (Burkholderia phymatum)).